The sequence spans 545 residues: Glutamine-dependent NAD(+) synthetase (545 aa).

Positions 5 to 247 constitute a CN hydrolase domain; the sequence is LRIAMAQFDF…DQWLVVDYMR (243 aa). The active-site Proton acceptor; for glutaminase activity is the glutamate 46. Catalysis depends on lysine 113, which acts as the For glutaminase activity. L-glutamine is bound at residue tyrosine 119. Cysteine 151 functions as the Nucleophile; for glutaminase activity in the catalytic mechanism. L-glutamine is bound by residues serine 177 and lysine 183. The interval 269–545 is ligase; the sequence is VWRAVVRGVQ…RYPISNAYRG (277 aa). 292–299 is an ATP binding site; sequence GLSGGIDS. Deamido-NAD(+) is bound at residue asparagine 375. Threonine 399 is a binding site for ATP. 2 residues coordinate deamido-NAD(+): glutamate 404 and lysine 516.

In the C-terminal section; belongs to the NAD synthetase family.

It carries out the reaction deamido-NAD(+) + L-glutamine + ATP + H2O = L-glutamate + AMP + diphosphate + NAD(+) + H(+). Its pathway is cofactor biosynthesis; NAD(+) biosynthesis; NAD(+) from deamido-NAD(+) (L-Gln route): step 1/1. In terms of biological role, catalyzes the ATP-dependent amidation of deamido-NAD to form NAD. Uses L-glutamine as a nitrogen source. The polypeptide is Glutamine-dependent NAD(+) synthetase (Xylella fastidiosa (strain 9a5c)).